The following is a 406-amino-acid chain: Tryptophan 2,3-dioxygenase (406 aa).

Position 19 is a phosphoserine (serine 19). Substrate is bound by residues phenylalanine 72 to histidine 76 and arginine 144. Histidine 328 contacts heme. Threonine 342 contacts substrate.

This sequence belongs to the tryptophan 2,3-dioxygenase family. As to quaternary structure, homotetramer. Dimer of dimers. It depends on heme as a cofactor. In terms of tissue distribution, liver.

It carries out the reaction L-tryptophan + O2 = N-formyl-L-kynurenine. It participates in amino-acid degradation; L-tryptophan degradation via kynurenine pathway; L-kynurenine from L-tryptophan: step 1/2. Functionally, heme-dependent dioxygenase that catalyzes the oxidative cleavage of the L-tryptophan (L-Trp) pyrrole ring and converts L-tryptophan to N-formyl-L-kynurenine. Catalyzes the oxidative cleavage of the indole moiety. The protein is Tryptophan 2,3-dioxygenase of Rattus norvegicus (Rat).